The following is an 887-amino-acid chain: MTNQTPMMQQYLKIKSQYQDCLLFFRLGDFYEMFFEDAKVASRVLEITLTKRDAKKEDPIPMCGVPYHSADGYIETLISNGYKVAICEQMEDPRQTKGMVRREVVRIVTPGTVMDQGGVDEKQNNYILSFIQSASMYALSYCDVSTGELKVTHFEDEATLINEITTINPNEIVVKEAIGESLKRQISLTTETITVLPDISDVKYDVNTTNDSHLYHVTQLLLDYVYHTQKRDLSHIESVITYEAVDFMKMDFYAKRNLELTESIRLKSKKGTLLWLMDETKTPMGARRLKQWIDRPLIQKKQIESRLDTVDQFINHFIERDTLRGYLNQVYDIERLVGRVSYGNVNARDLIQLKHSISEIPNIKNLLQAFDEQMTAQFEALEPLDDLLNLLEESLKEEPPISVKEGGLFKTGFNETLDSYLEASKNGKNWLAELQTKERQRTGIKSLKISFNKVFGYFIEITRANLQGFDPTEFGYHRKQTLSNAERFITDELKEKEDIILGAEDKAIELEYQLFVQLREQIKAYTERLQKQAKVISELDCLQSFAEIAQKYNYARPTFSEDKTLELVNSRHPVVERVMDHNDYVPNDCELDKETFIYLITGPNMSGKSTYMRQVAIISIMAQMGAYVPCESAILPVFDQIFTRIGAADDLVSGKSTFMVEMLEAQKALAHATEHSLIIFDEIGRGTSTYDGLALAQAMIEYVAHTSHAKTLFSTHYHELTTLDQSLACLKNVHVAANEYNGELIFLHKVKDGAVDDSYGIQVAKLAHLPVEVINRVQVILDAFEQSNNQTNNKNTMNHVDIPTDKNLNASSDEVTEIKATYYVDNEQSAATQHAKSDGQFEQAAFDLFDSPAKQSEIENEIKTLNLSNMTPIEALVKLSELQKQLK.

602 to 609 lines the ATP pocket; it reads GPNMSGKS.

It belongs to the DNA mismatch repair MutS family.

In terms of biological role, this protein is involved in the repair of mismatches in DNA. It is possible that it carries out the mismatch recognition step. This protein has a weak ATPase activity. The protein is DNA mismatch repair protein MutS of Staphylococcus saprophyticus subsp. saprophyticus (strain ATCC 15305 / DSM 20229 / NCIMB 8711 / NCTC 7292 / S-41).